A 503-amino-acid polypeptide reads, in one-letter code: Glutamate/gamma-aminobutyrate antiporter (503 aa).

33-43 (LHLVFFLLLGG) serves as a coordination point for L-glutamate. 7 helical membrane passes run 35-55 (LVFF…LCAA), 153-173 (FVVG…AYFI), 194-214 (VSTL…EASA), 232-252 (ILLV…VAAV), 366-386 (LTVV…FVLI), 407-427 (IIAG…FVPP), and 440-460 (MILL…YELH).

This sequence belongs to the amino acid-polyamine-organocation (APC) superfamily. Glutamate:GABA antiporter (GGA) (TC 2.A.3.7) family.

It is found in the cell membrane. The enzyme catalyses 4-aminobutanoate(in) + L-glutamate(out) = 4-aminobutanoate(out) + L-glutamate(in). Involved in glutaminase-dependent acid resistance. Exchanges extracellular glutamate (Glu) for intracellular gamma-aminobutyric acid (GABA) under acidic conditions. This is Glutamate/gamma-aminobutyrate antiporter (gadC) from Lactococcus lactis subsp. lactis (strain IL1403) (Streptococcus lactis).